Consider the following 368-residue polypeptide: POU domain, class 3, transcription factor 1 (368 aa).

Residues 1-16 (MATTAQYIPRNNSLPS) are compositionally biased toward polar residues. Disordered regions lie at residues 1-28 (MATTAQYIPRNNSLPSNPLMHPDSDRMH), 69-88 (TDWTSGTHIGQAEHNKASVQ), 100-134 (SHLVHQPTQNSHHGSWAPTTTHHLSPLSPASNGHQ), and 147-193 (SPQP…PSSD). The segment covering 79–88 (QAEHNKASVQ) has biased composition (basic and acidic residues). Residues 105 to 134 (QPTQNSHHGSWAPTTTHHLSPLSPASNGHQ) show a composition bias toward polar residues. Residues 155 to 170 (GLRDPLHDDAGSHDNQ) show a composition bias toward basic and acidic residues. Positions 187–261 (EDAPSSDDLE…LLNKWLEETD (75 aa)) constitute a POU-specific domain. Positions 279–338 (KRKKRTSIEVGVKGALENHFLKCPKPSAHEITTLAGTLQLEKEVVRVWFCNRRQKEKRMT) form a DNA-binding region, homeobox.

It belongs to the POU transcription factor family. Class-3 subfamily. Predominantly expressed in the embryonic and adult central nervous system.

It is found in the nucleus. Transcription factor that may play important roles in patterning the embryonic brain. Could directly respond to the reception of the sonic hedgehog (shh) signal. This is POU domain, class 3, transcription factor 1 (pou3f1) from Danio rerio (Zebrafish).